The primary structure comprises 642 residues: Chaperone protein HtpG (642 aa).

The tract at residues 1-350 (MATDTQKETL…SNDLSLNVSR (350 aa)) is a; substrate-binding. A b region spans residues 351–567 (EILQNDHAVD…EYDMGLQMRR (217 aa)). Residues 568-642 (LLEQAGQKLP…MNKLIVQLSK (75 aa)) form a c region.

It belongs to the heat shock protein 90 family. Homodimer.

It localises to the cytoplasm. Molecular chaperone. Has ATPase activity. The chain is Chaperone protein HtpG from Marinomonas sp. (strain MWYL1).